The sequence spans 313 residues: Probable RuBisCO transcriptional regulator (313 aa).

The HTH lysR-type domain maps to 6–63 (FTLDQLLILKAIAAQGSFKKAADSLYISQPAVSMQVQNIEKQLNVQLLDRGGRRANLT). Residues 23–42 (FKKAADSLYISQPAVSMQVQ) constitute a DNA-binding region (H-T-H motif).

The protein belongs to the LysR transcriptional regulatory family.

The protein localises to the plastid. It is found in the chloroplast. Functionally, trans-acting transcriptional regulator of RuBisCO genes (rbcL and rbcS) expression. This Chlorokybus atmophyticus (Soil alga) protein is Probable RuBisCO transcriptional regulator (rbcR).